A 61-amino-acid chain; its full sequence is Protein translocase subunit SecE (61 aa).

The chain crosses the membrane as a helical span at residues 39–59 (LGILVIGLVGMLIRIIGILML).

The protein belongs to the SecE/SEC61-gamma family. As to quaternary structure, component of the Sec protein translocase complex. Heterotrimer consisting of SecY (alpha), SecG (beta) and SecE (gamma) subunits. The heterotrimers can form oligomers, although 1 heterotrimer is thought to be able to translocate proteins. Interacts with the ribosome. May interact with SecDF, and other proteins may be involved.

The protein resides in the cell membrane. Essential subunit of the Sec protein translocation channel SecYEG. Clamps together the 2 halves of SecY. May contact the channel plug during translocation. This Pyrococcus horikoshii (strain ATCC 700860 / DSM 12428 / JCM 9974 / NBRC 100139 / OT-3) protein is Protein translocase subunit SecE.